The following is a 427-amino-acid chain: Enolase (427 aa).

Glutamine 163 serves as a coordination point for (2R)-2-phosphoglycerate. Glutamate 205 serves as the catalytic Proton donor. Residues aspartate 242, glutamate 285, and aspartate 312 each coordinate Mg(2+). (2R)-2-phosphoglycerate is bound by residues lysine 337, arginine 366, serine 367, and lysine 388. The active-site Proton acceptor is the lysine 337.

The protein belongs to the enolase family. Mg(2+) is required as a cofactor.

It localises to the cytoplasm. The protein localises to the secreted. It is found in the cell surface. It carries out the reaction (2R)-2-phosphoglycerate = phosphoenolpyruvate + H2O. It participates in carbohydrate degradation; glycolysis; pyruvate from D-glyceraldehyde 3-phosphate: step 4/5. Catalyzes the reversible conversion of 2-phosphoglycerate (2-PG) into phosphoenolpyruvate (PEP). It is essential for the degradation of carbohydrates via glycolysis. The protein is Enolase of Ralstonia pickettii (strain 12J).